Reading from the N-terminus, the 501-residue chain is Myrosinase MA1 (501 aa).

Intrachain disulfides connect Cys6/Cys438, Cys14/Cys434, and Cys206/Cys214. Asn21 is a glycosylation site (N-linked (GlcNAc...) asparagine). Gln39 contacts substrate. Position 56 (His56) interacts with Zn(2+). The N-linked (GlcNAc...) asparagine glycan is linked to Asn60. Asp70 contributes to the Zn(2+) binding site. A glycan (N-linked (GlcNAc...) asparagine) is linked at Asn90. His141 and Asn186 together coordinate substrate. Gln187 contacts L-ascorbate. Asn218 and Asn244 each carry an N-linked (GlcNAc...) asparagine glycan. Arg259 provides a ligand contact to L-ascorbate. N-linked (GlcNAc...) asparagine glycans are attached at residues Asn265 and Asn292. Residue Tyr330 coordinates substrate. Residues Asn343, Asn346, and Asn361 are each glycosylated (N-linked (GlcNAc...) asparagine). Residue Glu409 is the Nucleophile of the active site. Substrate-binding positions include Trp457 and 464–465; that span reads EF. A glycan (N-linked (GlcNAc...) asparagine) is linked at Asn482.

This sequence belongs to the glycosyl hydrolase 1 family. In terms of assembly, homodimer. In vacuoles called myrosin grains of a certain class of cells, myrosin cells, distributed in the cotyledons and the axis of the embryo as well as in different organs of the growing plant.

The protein resides in the vacuole. The enzyme catalyses a thioglucoside + H2O = a sugar + a thiol.. Its function is as follows. Degradation of glucosinolates (glucose residue linked by a thioglucoside bound to an amino acid derivative) to glucose, sulfate and any of the products: thiocyanates, isothiocyanates, nitriles, epithionitriles or oxazolidine-2-thiones. The sequence is that of Myrosinase MA1 from Sinapis alba (White mustard).